The primary structure comprises 208 residues: Small ribosomal subunit protein uS4 (208 aa).

Residues 32-53 (LNRKRGKNSPGQHGASKVKMSD) form a disordered region. In terms of domain architecture, S4 RNA-binding spans 99–161 (LRLDNVVYRL…YKSNVIIKKL (63 aa)).

It belongs to the universal ribosomal protein uS4 family. As to quaternary structure, part of the 30S ribosomal subunit. Contacts protein S5. The interaction surface between S4 and S5 is involved in control of translational fidelity.

In terms of biological role, one of the primary rRNA binding proteins, it binds directly to 16S rRNA where it nucleates assembly of the body of the 30S subunit. Its function is as follows. With S5 and S12 plays an important role in translational accuracy. This Endomicrobium trichonymphae protein is Small ribosomal subunit protein uS4.